A 176-amino-acid polypeptide reads, in one-letter code: Ferritin, spleen middle subunit (176 aa).

The region spanning 7–156 (QNYHRDCEAA…DFITNLSRMD (150 aa)) is the Ferritin-like diiron domain. Residues glutamate 24, glutamate 59, histidine 62, glutamate 104, and glutamine 138 each contribute to the Fe cation site.

This sequence belongs to the ferritin family. In spleen, forms a homomer. The functional molecule forms a roughly spherical shell with a diameter of 12 nm and contains a central cavity into which the insoluble mineral iron core is deposited. As to expression, spleen (at protein level).

The enzyme catalyses 4 Fe(2+) + O2 + 4 H(+) = 4 Fe(3+) + 2 H2O. Its function is as follows. Stores iron in a soluble, non-toxic, readily available form. Important for iron homeostasis. Has ferroxidase activity. Iron is taken up in the ferrous form and deposited as ferric hydroxides after oxidation. The protein is Ferritin, spleen middle subunit of Trematomus bernacchii (Emerald rockcod).